The primary structure comprises 515 residues: Pre-glycoprotein polyprotein GP complex (515 aa).

Glycine 2 carries the N-myristoyl glycine; by host lipid modification. The Extracellular portion of the chain corresponds to glycine 2–glutamate 17. A helical transmembrane segment spans residues alanine 18–lysine 33. Topologically, residues glycine 34–serine 58 are cytoplasmic. Cysteine 57 is a Zn(2+) binding site. At histidine 59–aspartate 453 the chain is on the extracellular side. 4 disulfide bridges follow: cysteine 87–cysteine 255, cysteine 300–cysteine 313, cysteine 322–cysteine 331, and cysteine 385–cysteine 406. N-linked (GlcNAc...) asparagine; by host glycans are attached at residues asparagine 90, asparagine 112, asparagine 127, asparagine 180, and asparagine 248. N-linked (GlcNAc...) asparagine; by host glycosylation is found at asparagine 386, asparagine 394, and asparagine 416. The chain crosses the membrane as a helical span at residues leucine 454–proline 474. Topologically, residues threonine 475–arginine 515 are cytoplasmic. Zn(2+)-binding residues include histidine 476, histidine 478, cysteine 484, histidine 488, cysteine 496, and cysteine 498.

This sequence belongs to the arenaviridae GPC protein family. Interacts with glycoprotein G2. Part of the GP complex (GP-C) together with glycoprotein G1 and glycoprotein G2. The GP-complex interacts with protein Z, which interacts with ribonucleocapsid; these interactions may induce virion budding. As to quaternary structure, homotrimer; disulfide-linked. In pre-fusion state, G1 homotrimers bind G2 homotrimers via ionic interactions. Part of the GP complex (GP-C) together with glycoprotein G2 and the stable signal peptide. The GP-complex interacts with protein Z, which interacts with ribonucleocapsid; these interactions may induce virion budding. In terms of assembly, homotrimer. Interacts with the stable signal peptide. In pre-fusion state, G2 homotrimers bind G1 homotrimers via ionic interactions. Part of the GP complex (GP-C) together with glycoprotein G1 and the stable signal peptide. Acidification in the endosome triggers rearrangements, which ultimately leads to a 6 helix bundle formed by the two heptad repeat domains (HR1 and HR2) in post-fusion state. The GP-complex interacts with protein Z, which interacts with ribonucleocapsid; these interactions may induce virion budding. Post-translationally, specific enzymatic cleavages in vivo yield mature proteins. GP-C polyprotein is cleaved in the endoplasmic reticulum by the host protease MBTPS1. Only cleaved glycoprotein is incorporated into virions. The SSP remains stably associated with the GP complex following cleavage by signal peptidase and plays crucial roles in the trafficking of GP through the secretory pathway. In terms of processing, myristoylation is necessary for GP2-mediated fusion activity.

The protein localises to the virion membrane. It localises to the host endoplasmic reticulum membrane. The protein resides in the host Golgi apparatus membrane. Its subcellular location is the host cell membrane. In terms of biological role, functions as a cleaved signal peptide that is retained as the third component of the GP complex (GP-C). Helps to stabilize the spike complex in its native conformation. The SSP is required for efficient glycoprotein expression, post-translational maturation cleavage of G1 and G2, glycoprotein transport to the cell surface plasma membrane, formation of infectious virus particles, and acid pH-dependent glycoprotein-mediated cell fusion. Its function is as follows. Forms the virion spikes together with glycoprotein G2. The glycoprotein spike trimers are connected to the underlying matrix. Mediates virus attachment to host receptor alpha-dystroglycan DAG1. This attachment induces virion internalization predominantly through clathrin- and caveolin-independent endocytosis. Forms the virion spikes together with glycoprotein G1. The glycoprotein spike trimers are connected to the underlying matrix. Class I viral fusion protein that directs fusion of viral and host endosomal membranes, leading to delivery of the nucleocapsid into the cytoplasm. Membrane fusion is mediated by irreversible conformational changes induced by acidification. This is Pre-glycoprotein polyprotein GP complex from Latino mammarenavirus (isolate Rat/Bolivia/MARU 1924/1965) (LATV).